We begin with the raw amino-acid sequence, 319 residues long: Taste receptor type 2 member 14 (319 aa).

The Extracellular segment spans residues 1 to 7 (MDGVIKS). The chain crosses the membrane as a helical span at residues 8-28 (IFTFILILEFIIGNLGNSFIV). At 29 to 55 (LVNCIDWVKRRKISLVDQLLIALAISR) the chain is on the cytoplasmic side. A helical transmembrane segment spans residues 56 to 76 (ISLVWSIFGSWCVSVVFPALF). The Extracellular portion of the chain corresponds to 77-87 (ATEKLLRMLTN). Positions 86 and 89 each coordinate cholesterol. The chain crosses the membrane as a helical span at residues 88 to 108 (IWTVTNHFSVWLATILGTFYF). Over 109-129 (LKIANFSNSIFLYLKWRVKKV) the chain is Cytoplasmic. Residues 130–150 (VLVLLLVTLVLLFLNILLINI) traverse the membrane as a helical segment. At 151–184 (HINASINGYRGNMTCSSASCNFIRFSSAIALTST) the chain is on the extracellular side. N153 and N162 each carry an N-linked (GlcNAc...) asparagine glycan. Residue A180 coordinates cholesterol. Residues 185-205 (VFILIPFTLSLATFLLLSFSL) form a helical membrane-spanning segment. Residues 206–232 (WKHRKKMQHTVKGYRDVSTKAHRGVMQ) are Cytoplasmic-facing. A helical transmembrane segment spans residues 233 to 253 (TVITFLLLYAVFFLTFFVSIW). Residues 254-261 (ISERLKEN) are Extracellular-facing. Residues 262–282 (QIIILSEMMGLAYPSGHSCVL) form a helical membrane-spanning segment. Cholesterol is bound by residues I265 and E268. Over 283–317 (ILGNKKLRQASLSVLWWLRYRFKDGELSGHKEFRE) the chain is Cytoplasmic.

It belongs to the G-protein coupled receptor T2R family. In terms of assembly, core component of the TAS2R14-GNAI1 complex, consisting of TAS2R14, GNAI1, GNB1 and GNG2; within the complex interacts with GNAI1. Core component of the TAS2R14-GNAT3 complex, consisting of TAS2R14, GNAT3, GNB1 and GNG2; within the complex interacts with GNAT3. Core component of the TAS2R14-GNAS2 complex, consisting of TAS2R14, GNAS2, GNB1 and GNG2; within the complex interacts with GNAS2.

It is found in the membrane. It carries out the reaction Ca(2+)(in) = Ca(2+)(out). It catalyses the reaction 3',5'-cyclic AMP(in) = 3',5'-cyclic AMP(out). Basal activity is enhanced by binding to bitter tastants, such as flufenamic acid and aristolochic acid. Regulated by cholesterol in a concentration-dependent manner. Its function is as follows. Gustducin-linked G-protein coupled receptor that plays a role in the perception of bitterness. The activity of this receptor stimulates GNAT3, activating the gustducin G-protein pathway. Likely plays a role in sensing the chemical composition of the gastrointestinal content and other extra-oral tissues via the inhibitory G-protein pathways. The protein is Taste receptor type 2 member 14 (TAS2R14) of Papio hamadryas (Hamadryas baboon).